A 164-amino-acid chain; its full sequence is Phosphopantetheine adenylyltransferase (164 aa).

A substrate-binding site is contributed by Ser-9. ATP contacts are provided by residues 9–10 (SF) and His-17. Residues Lys-41, Leu-73, and Lys-87 each contribute to the substrate site. Residues 88-90 (GLR), Glu-98, and 123-129 (YSYLSSS) each bind ATP.

Belongs to the bacterial CoaD family. Homohexamer. The cofactor is Mg(2+).

It is found in the cytoplasm. The enzyme catalyses (R)-4'-phosphopantetheine + ATP + H(+) = 3'-dephospho-CoA + diphosphate. The protein operates within cofactor biosynthesis; coenzyme A biosynthesis; CoA from (R)-pantothenate: step 4/5. In terms of biological role, reversibly transfers an adenylyl group from ATP to 4'-phosphopantetheine, yielding dephospho-CoA (dPCoA) and pyrophosphate. The chain is Phosphopantetheine adenylyltransferase from Clostridium botulinum (strain 657 / Type Ba4).